The sequence spans 538 residues: Carboxypeptidase 2 (538 aa).

The signal sequence occupies residues 1–21 (MVAYRFLTLISLGLGSHCVSA). N-linked (GlcNAc...) asparagine glycosylation is present at Asn-46. The interval 53–76 (PAFTSPGTVSRGFSDGTSGPTRDE) is disordered. The 281-residue stretch at 71–351 (GPTRDETMEG…VMAKSVLQTA (281 aa)) folds into the Peptidase M14 domain. Positions 136, 139, and 224 each coordinate Zn(2+). The active-site Proton donor/acceptor is the Glu-322. Residues Asn-393 and Asn-459 are each glycosylated (N-linked (GlcNAc...) asparagine).

It belongs to the peptidase M14 family. Zn(2+) is required as a cofactor.

Its subcellular location is the secreted. Extracellular metalloprotease that contributes to pathogenicity. In Trichophyton rubrum (Athlete's foot fungus), this protein is Carboxypeptidase 2 (MCPB).